A 499-amino-acid chain; its full sequence is Cobyric acid synthase (499 aa).

The GATase cobBQ-type domain occupies 251 to 442 (SLDIAVVSLK…LHGVFDNLEW (192 aa)). Catalysis depends on Cys-332, which acts as the Nucleophile. His-434 is a catalytic residue.

It belongs to the CobB/CobQ family. CobQ subfamily.

It functions in the pathway cofactor biosynthesis; adenosylcobalamin biosynthesis. In terms of biological role, catalyzes amidations at positions B, D, E, and G on adenosylcobyrinic A,C-diamide. NH(2) groups are provided by glutamine, and one molecule of ATP is hydrogenolyzed for each amidation. The chain is Cobyric acid synthase from Streptococcus sanguinis (strain SK36).